A 200-amino-acid chain; its full sequence is Rho GDP-dissociation inhibitor 2 (200 aa).

The interval 1–39 is disordered; sequence MTEKDAQPQLEEADDDLDSKLNYKPPPQKSLKELQEMDK. T2 carries the post-translational modification N-acetylthreonine. The residue at position 20 (K20) is an N6-acetyllysine. Y23 carries the post-translational modification Phosphotyrosine. 5 positions are modified to N6-acetyllysine: K24, K39, K46, K101, and K123. Positions 30–39 are enriched in basic and acidic residues; sequence SLKELQEMDK. A Phosphoserine modification is found at S144. Position 174 is an N6-acetyllysine (K174).

It belongs to the Rho GDI family. In terms of assembly, interacts with RHOA. Interacts with RAC1. Interacts with RAC2. Interacts with CDC42. In terms of tissue distribution, preferentially expressed in hematopoietic cells.

It localises to the cytoplasm. The protein resides in the cytosol. In terms of biological role, regulates the GDP/GTP exchange reaction of the Rho proteins by inhibiting the dissociation of GDP from them, and the subsequent binding of GTP to them. Regulates reorganization of the actin cytoskeleton mediated by Rho family members. This Mus musculus (Mouse) protein is Rho GDP-dissociation inhibitor 2 (Arhgdib).